A 404-amino-acid polypeptide reads, in one-letter code: Argininosuccinate synthase (404 aa).

Residues 12–20 and alanine 39 contribute to the ATP site; that span reads AYSGGLDTS. The L-citrulline site is built by tyrosine 91 and serine 96. Glycine 121 lines the ATP pocket. 3 residues coordinate L-aspartate: threonine 123, asparagine 127, and aspartate 128. Asparagine 127 lines the L-citrulline pocket. 5 residues coordinate L-citrulline: arginine 131, serine 180, serine 189, glutamate 265, and tyrosine 277.

It belongs to the argininosuccinate synthase family. Type 1 subfamily. In terms of assembly, homotetramer.

The protein localises to the cytoplasm. The enzyme catalyses L-citrulline + L-aspartate + ATP = 2-(N(omega)-L-arginino)succinate + AMP + diphosphate + H(+). It participates in amino-acid biosynthesis; L-arginine biosynthesis; L-arginine from L-ornithine and carbamoyl phosphate: step 2/3. The polypeptide is Argininosuccinate synthase (Vibrio campbellii (strain ATCC BAA-1116)).